We begin with the raw amino-acid sequence, 344 residues long: Ureide permease 3 (344 aa).

At 1-10 (MYVIESKGGT) the chain is on the extracellular side. Residues 11-31 (ITCMLLALLFLGTWPAIMTLT) form a helical membrane-spanning segment. The Cytoplasmic segment spans residues 32–42 (ERRGRLPQHTY). The helical transmembrane segment at 43–63 (LDYTLTNLLAAVIIAFTLGEI) threads the bilayer. The Extracellular portion of the chain corresponds to 64–78 (SPSRPNFTTQLSQDN). The chain crosses the membrane as a helical span at residues 79–99 (WPSVMFAMAGGIFLSLGTLAT). Topologically, residues 100–101 (QY) are cytoplasmic. The chain crosses the membrane as a helical span at residues 102-122 (AWAFVGLSVTEVITASIAVVI). Topologically, residues 123–136 (GTTLNYFLDDRINR) are extracellular. A helical transmembrane segment spans residues 137 to 157 (AEVLFPGVACFLIAVCFGSAV). Residues 158 to 208 (HKSNAADNKSKLQGFKSLETTSSFQMETSSIKEGKAKVGTADFLIEVEKQR) are Cytoplasmic-facing. 209–216 (AIKVFGKS) is an ATP binding site. The helical transmembrane segment at 209 to 229 (AIKVFGKSTIIGLAITFFAVP) threads the bilayer. The Extracellular portion of the chain corresponds to 230–235 (KLNVYT). The chain crosses the membrane as a helical span at residues 236–256 (AFFYFSISSFGVGLILNIIFL). Residues 257-278 (YWPILGLPRSSFKAYLNDWNGR) lie on the Cytoplasmic side of the membrane. A helical membrane pass occupies residues 279–299 (GWSFLAGFLCGFGNGLQFMGG). Topologically, residues 300–344 (QAAGYAAAGAVQIENKHFGGYCCLENTKDHQEKHIHFLSVCYLCS) are extracellular.

The protein belongs to the plant ureide permease (TC 2.A.7.19) family.

The protein resides in the membrane. Its function is as follows. Proton-coupled transporter that transports a wide spectrum of oxo derivatives of heterocyclic nitrogen compounds. The polypeptide is Ureide permease 3 (Arabidopsis thaliana (Mouse-ear cress)).